A 319-amino-acid chain; its full sequence is L-lactate dehydrogenase 2 (319 aa).

NAD(+) is bound by residues Val16, Asp37, Lys42, Tyr68, and 82 to 83 (GA). Substrate-binding residues include Gln85 and Arg91. NAD(+)-binding positions include Ser104, 121-123 (AAN), and Ser146. 123–126 (NPVD) provides a ligand contact to substrate. 151 to 154 (DSAR) contacts substrate. His178 functions as the Proton acceptor in the catalytic mechanism. Tyr222 is modified (phosphotyrosine). Thr231 provides a ligand contact to substrate.

This sequence belongs to the LDH/MDH superfamily. LDH family. Homotetramer.

Its subcellular location is the cytoplasm. It catalyses the reaction (S)-lactate + NAD(+) = pyruvate + NADH + H(+). Its pathway is fermentation; pyruvate fermentation to lactate; (S)-lactate from pyruvate: step 1/1. In terms of biological role, catalyzes the conversion of lactate to pyruvate (Potential). Contributes to S.aureus growth during nitrosative stress in both aerobically and anaerobically cultured cells, despite playing a secondary role in this resistance mechanism. The sequence is that of L-lactate dehydrogenase 2 from Staphylococcus aureus (strain USA300).